A 311-amino-acid chain; its full sequence is Mas-related G-protein coupled receptor member E (311 aa).

The Extracellular segment spans residues 1 to 25 (MEPREAGQHAGAADGAQEDVAFNLV). A helical membrane pass occupies residues 26 to 46 (ILSLTEGLGLGGLLGNGAVLW). At 47 to 63 (LLSSNVYRNPFAIYLLD) the chain is on the cytoplasmic side. A helical transmembrane segment spans residues 64–84 (VACADLIFLGCHMVAIIPDLL). Over 85–95 (QGRLDFPGFVQ) the chain is Extracellular. The chain crosses the membrane as a helical span at residues 96-116 (TSLATLRFFCYIVGLSLLVAV). Residues 117 to 136 (SVEQCLAALFPAWYSCRRPR) lie on the Cytoplasmic side of the membrane. The helical transmembrane segment at 137–157 (HLTTCVCALTWACCLLLHLLL) threads the bilayer. Topologically, residues 158-177 (SGACTQFFGEPSRHLCRTLW) are extracellular. A helical membrane pass occupies residues 178-198 (LVAAVLLAVLCCTMCGASLML). The Cytoplasmic segment spans residues 199–216 (LLQVERGPQRPPPRGFPT). A helical membrane pass occupies residues 217 to 237 (LILLAVLLFLFCGLPFGIYWL). Residues 238–251 (SRNLLWHIPHYFYH) are Extracellular-facing. The chain crosses the membrane as a helical span at residues 252–272 (FSFLTAAVYCAAKPVVYFCLG). At 273-311 (SAQGRRLPLRLVLQRALGDEAELGAVRETSRRGLVDIAA) the chain is on the cytoplasmic side.

This sequence belongs to the G-protein coupled receptor 1 family. Mas subfamily.

It localises to the cell membrane. In terms of biological role, orphan receptor. May regulate nociceptor function and/or development, including the sensation or modulation of pain. The chain is Mas-related G-protein coupled receptor member E (MRGPRE) from Macaca fascicularis (Crab-eating macaque).